A 320-amino-acid chain; its full sequence is Cytochrome f (320 aa).

Residues 1 to 36 form the signal peptide; that stretch reads MKLNSLINLIQKSIYSCTLLLTILNIICIAPNSSNA. Heme-binding residues include Phe-37, Cys-57, Cys-60, and His-61. A helical membrane pass occupies residues 286-305; it reads IKGMIAFFFVSVLAQIFFVL.

It belongs to the cytochrome f family. In terms of assembly, the 4 large subunits of the cytochrome b6-f complex are cytochrome b6, subunit IV (17 kDa polypeptide, petD), cytochrome f and the Rieske protein, while the 4 small subunits are PetG, PetL, PetM and PetN. The complex functions as a dimer. The cofactor is heme.

Its subcellular location is the plastid. The protein resides in the chloroplast thylakoid membrane. In terms of biological role, component of the cytochrome b6-f complex, which mediates electron transfer between photosystem II (PSII) and photosystem I (PSI), cyclic electron flow around PSI, and state transitions. In Porphyra purpurea (Red seaweed), this protein is Cytochrome f (petA).